The chain runs to 192 residues: BREX protein BrxB (192 aa).

It belongs to the BrxB family.

Its function is as follows. BREX systems (bacteriophage exclusion) provide immunity against bacteriophage. Part of a type 1 BREX system. This system allows phage adsorption but prevents phage DNA replication, without degradation of the phage DNA. Methylation of bacterial DNA by PglX probably guides self/non-self discrimination. When the brxA-brxB-brxC-pglX and pglZ-brxL operons are transformed into a susceptible B.subtilis strain (BEST7003) they confer resistance to bacteriophages SPbeta, SP16, Zeta, phi3T and SP02 and partial protection to phages SP01 and SP82G (these include lytic and temperate phage). They do not protect against phages phi105, rho10 or rho14. Additionally confers a very slight reduction in efficiency of plasmid transformation. The polypeptide is BREX protein BrxB (Bacillus cereus (strain H3081.97)).